Reading from the N-terminus, the 152-residue chain is Xanthine-guanine phosphoribosyltransferase (152 aa).

5-phospho-alpha-D-ribose 1-diphosphate is bound by residues 37–38 (RG), Arg-69, and 88–96 (DDLVDTGGT). Arg-69 contributes to the GMP binding site. Asp-89 serves as a coordination point for Mg(2+). Residues Asp-92 and Ile-135 each contribute to the guanine site. Asp-92 and Ile-135 together coordinate xanthine. GMP contacts are provided by residues 92–96 (DTGGT) and 134–135 (WI).

It belongs to the purine/pyrimidine phosphoribosyltransferase family. XGPT subfamily. Homotetramer. Mg(2+) is required as a cofactor.

It localises to the cell inner membrane. The catalysed reaction is GMP + diphosphate = guanine + 5-phospho-alpha-D-ribose 1-diphosphate. It catalyses the reaction XMP + diphosphate = xanthine + 5-phospho-alpha-D-ribose 1-diphosphate. It carries out the reaction IMP + diphosphate = hypoxanthine + 5-phospho-alpha-D-ribose 1-diphosphate. The protein operates within purine metabolism; GMP biosynthesis via salvage pathway; GMP from guanine: step 1/1. It functions in the pathway purine metabolism; XMP biosynthesis via salvage pathway; XMP from xanthine: step 1/1. Purine salvage pathway enzyme that catalyzes the transfer of the ribosyl-5-phosphate group from 5-phospho-alpha-D-ribose 1-diphosphate (PRPP) to the N9 position of the 6-oxopurines guanine and xanthine to form the corresponding ribonucleotides GMP (guanosine 5'-monophosphate) and XMP (xanthosine 5'-monophosphate), with the release of PPi. To a lesser extent, also acts on hypoxanthine. The protein is Xanthine-guanine phosphoribosyltransferase of Shigella boydii serotype 4 (strain Sb227).